Reading from the N-terminus, the 370-residue chain is Dihydroorotate dehydrogenase (370 aa).

Residues K82, 135–139 (NSFGM), and N200 contribute to the substrate site. An FMN-binding site is contributed by 82-83 (KT). Position 200 (N200) interacts with FMN. The active-site Nucleophile is C203. 2 residues coordinate FMN: K241 and I269. Substrate is bound at residue 270 to 271 (NT). FMN is bound by residues G297, 328–329 (GG), and 350–351 (AT).

The protein belongs to the dihydroorotate dehydrogenase family. Requires FMN as cofactor.

The enzyme catalyses (S)-dihydroorotate + A = orotate + AH2. It participates in pyrimidine metabolism; UMP biosynthesis via de novo pathway. In terms of biological role, catalyzes the conversion of dihydroorotate to orotate. Participates in the pyrimidine biosynthetic pathway. The protein is Dihydroorotate dehydrogenase (pyr4) of Dictyostelium discoideum (Social amoeba).